Consider the following 515-residue polypeptide: UPF0053 protein BUsg_314 (515 aa).

The next 7 helical transmembrane spans lie at 14–34 (LTLV…VAIL), 49–69 (IGLG…SWVV), 79–99 (NFFS…FLLF), 125–145 (FWAV…DAII), 150–170 (MVNQ…LMLL), 185–205 (VVVL…AEAL), and 207–227 (FYIP…IEIF). CBS domains are found at residues 309–368 (MTPR…NIDV) and 372–432 (ASQI…DADE).

The protein belongs to the UPF0053 family.

Its subcellular location is the cell membrane. In Buchnera aphidicola subsp. Schizaphis graminum (strain Sg), this protein is UPF0053 protein BUsg_314.